Consider the following 446-residue polypeptide: Glucose-6-phosphate isomerase (446 aa).

Glu-288 (proton donor) is an active-site residue. Catalysis depends on residues His-309 and Lys-423.

It belongs to the GPI family.

It is found in the cytoplasm. The enzyme catalyses alpha-D-glucose 6-phosphate = beta-D-fructose 6-phosphate. It functions in the pathway carbohydrate biosynthesis; gluconeogenesis. The protein operates within carbohydrate degradation; glycolysis; D-glyceraldehyde 3-phosphate and glycerone phosphate from D-glucose: step 2/4. Its function is as follows. Catalyzes the reversible isomerization of glucose-6-phosphate to fructose-6-phosphate. In Lacticaseibacillus casei (strain BL23) (Lactobacillus casei), this protein is Glucose-6-phosphate isomerase.